A 116-amino-acid polypeptide reads, in one-letter code: HTH-type transcriptional regulator SarV (116 aa).

Residues 51 to 74 (RDTLHFEMLWDTSKIDVIIRKIYK) constitute a DNA-binding region (H-T-H motif).

It belongs to the SarA family.

It localises to the cytoplasm. Its function is as follows. Part of the pathway by which MgrA and SarA control autolysis. This is HTH-type transcriptional regulator SarV (sarV) from Staphylococcus aureus (strain Mu50 / ATCC 700699).